The chain runs to 152 residues: Large ribosomal subunit protein bL9 (152 aa).

The protein belongs to the bacterial ribosomal protein bL9 family.

Binds to the 23S rRNA. This is Large ribosomal subunit protein bL9 from Mycobacterium bovis (strain ATCC BAA-935 / AF2122/97).